A 172-amino-acid polypeptide reads, in one-letter code: Peptidyl-tRNA hydrolase (172 aa).

Tyr-10 contributes to the tRNA binding site. Catalysis depends on His-15, which acts as the Proton acceptor. Residues Phe-59, Asn-61, and Asn-101 each contribute to the tRNA site.

The protein belongs to the PTH family. In terms of assembly, monomer.

It localises to the cytoplasm. The catalysed reaction is an N-acyl-L-alpha-aminoacyl-tRNA + H2O = an N-acyl-L-amino acid + a tRNA + H(+). Its function is as follows. Hydrolyzes ribosome-free peptidyl-tRNAs (with 1 or more amino acids incorporated), which drop off the ribosome during protein synthesis, or as a result of ribosome stalling. In terms of biological role, catalyzes the release of premature peptidyl moieties from peptidyl-tRNA molecules trapped in stalled 50S ribosomal subunits, and thus maintains levels of free tRNAs and 50S ribosomes. This chain is Peptidyl-tRNA hydrolase, found in Rubrobacter xylanophilus (strain DSM 9941 / JCM 11954 / NBRC 16129 / PRD-1).